The sequence spans 485 residues: Cysteine protease atg4da (485 aa).

The segment at 22-46 (ASASSKRHLGHGAVPDGIREGSGEP) is disordered. Residue Cys-131 is the Nucleophile of the active site. Catalysis depends on residues Asp-368 and His-370.

This sequence belongs to the peptidase C54 family.

It localises to the cytoplasm. It carries out the reaction [protein]-C-terminal L-amino acid-glycyl-phosphatidylethanolamide + H2O = [protein]-C-terminal L-amino acid-glycine + a 1,2-diacyl-sn-glycero-3-phosphoethanolamine. The enzyme catalyses [protein]-C-terminal L-amino acid-glycyl-phosphatidylserine + H2O = [protein]-C-terminal L-amino acid-glycine + a 1,2-diacyl-sn-glycero-3-phospho-L-serine. In terms of biological role, cysteine protease that plays a key role in autophagy by mediating both proteolytic activation and delipidation of ATG8 family proteins. The protease activity is required for proteolytic activation of ATG8 family proteins to reveal a C-terminal glycine. Exposure of the glycine at the C-terminus is essential for ATG8 proteins conjugation to phosphatidylethanolamine (PE) and insertion to membranes, which is necessary for autophagy. In addition to the protease activity, also mediates delipidation of ATG8 family proteins. Catalyzes delipidation of PE-conjugated forms of ATG8 proteins during macroautophagy. Also involved in non-canonical autophagy, a parallel pathway involving conjugation of ATG8 proteins to single membranes at endolysosomal compartments, by catalyzing delipidation of ATG8 proteins conjugated to phosphatidylserine (PS). ATG4D plays a role in the autophagy-mediated neuronal homeostasis in the central nervous system. The sequence is that of Cysteine protease atg4da from Danio rerio (Zebrafish).